The chain runs to 442 residues: L-seryl-tRNA(Sec) selenium transferase (442 aa).

Lys-284 carries the post-translational modification N6-(pyridoxal phosphate)lysine.

Belongs to the SelA family. Requires pyridoxal 5'-phosphate as cofactor.

It localises to the cytoplasm. It carries out the reaction L-seryl-tRNA(Sec) + selenophosphate + H(+) = L-selenocysteinyl-tRNA(Sec) + phosphate. Its pathway is aminoacyl-tRNA biosynthesis; selenocysteinyl-tRNA(Sec) biosynthesis; selenocysteinyl-tRNA(Sec) from L-seryl-tRNA(Sec) (bacterial route): step 1/1. Functionally, converts seryl-tRNA(Sec) to selenocysteinyl-tRNA(Sec) required for selenoprotein biosynthesis. This chain is L-seryl-tRNA(Sec) selenium transferase, found in Campylobacter fetus subsp. fetus (strain 82-40).